Consider the following 86-residue polypeptide: Serine protease inhibitor Kazal-type 4 (86 aa).

A signal peptide spans 1-26; that stretch reads MAVRLWVVALALAALFIVDREVPVSA. Residues 31 to 86 form the Kazal-like domain; sequence FSRMPICEHMTESPDCSRIYDPVCGTDGVTYESECKLCLARIENKQDIQIVKDGEC. Intrachain disulfides connect Cys-37–Cys-68, Cys-46–Cys-65, and Cys-54–Cys-86.

As to expression, synthesized in duodenal goblet cells and in monocytes in bone marrow and blood.

It is found in the secreted. Its function is as follows. Inhibits the glucose-induced insulin secretion from perfused pancreas; also plays a role in the immune system. Does not inhibit trypsin. This chain is Serine protease inhibitor Kazal-type 4 (SPINK4), found in Sus scrofa (Pig).